Consider the following 515-residue polypeptide: G-protein coupled receptor 176 (515 aa).

Residues 1-16 (MGHNGSWISPNASEPH) are compositionally biased toward polar residues. The tract at residues 1 to 20 (MGHNGSWISPNASEPHNASG) is disordered. Residues 1–42 (MGHNGSWISPNASEPHNASGAEAAGVNRSALGEFGEAQLYRQ) are Extracellular-facing. N-linked (GlcNAc...) asparagine glycosylation is found at Asn-4, Asn-11, Asn-17, and Asn-27. Residues 43–63 (FTTTVQVVIFIGSLLGNFMVL) traverse the membrane as a helical segment. The Cytoplasmic segment spans residues 64 to 82 (WSTCRTTVFKSVTNRFIKN). A helical transmembrane segment spans residues 83–103 (LACSGICASLVCVPFDIILST). The Extracellular segment spans residues 104–118 (SPHCCWWIYTMLFCK). The helical transmembrane segment at 119–139 (VVKFLHKVFCSVTILSFPAIA) threads the bilayer. Residues 140–160 (LDRYYSVLYPLERKISDAKSR) are Cytoplasmic-facing. The chain crosses the membrane as a helical span at residues 161 to 181 (ELVMYIWAHAVVASVPVFAVT). The Extracellular portion of the chain corresponds to 182–207 (NVADIYATSTCTEVWSNSLGHLVYVL). Residues 208–228 (VYNITTVIVPVVVVFLFLILI) form a helical membrane-spanning segment. The Cytoplasmic portion of the chain corresponds to 229-267 (RRALSASQKKKVIIAALRTPQNTISIPYASQREAELHAT). The helical transmembrane segment at 268–288 (LLSMVMVFILCSVPYATLVVY) threads the bilayer. The Extracellular portion of the chain corresponds to 289–299 (QTVLNVPDTSV). Residues 300–320 (FLLLTAVWLPKVSLLANPVLF) form a helical membrane-spanning segment. The Cytoplasmic portion of the chain corresponds to 321–515 (LTVNKSVRKC…KVSIFPKVDS (195 aa)).

This sequence belongs to the G-protein coupled receptor 1 family.

The protein localises to the cell membrane. Functionally, orphan receptor involved in normal circadian rhythm behavior. Acts through the G-protein subclass G(z)-alpha and has an agonist-independent basal activity to repress cAMP production. In Homo sapiens (Human), this protein is G-protein coupled receptor 176 (GPR176).